A 375-amino-acid polypeptide reads, in one-letter code: Chaperone protein DnaJ (375 aa).

The J domain occupies 5-70; the sequence is DYYEILGISK…EKRAAYDQYG (66 aa). The CR-type zinc finger occupies 130–208; sequence GIIKEICIPT…CHGNGRVERS (79 aa). Positions 143, 146, 160, 163, 182, 185, 196, and 199 each coordinate Zn(2+). CXXCXGXG motif repeat units lie at residues 143 to 150, 160 to 167, 182 to 189, and 196 to 203; these read CEKCRGTG, CMTCHGQG, CPTCHGHG, and CNKCHGNG.

The protein belongs to the DnaJ family. In terms of assembly, homodimer. Requires Zn(2+) as cofactor.

It is found in the cytoplasm. In terms of biological role, participates actively in the response to hyperosmotic and heat shock by preventing the aggregation of stress-denatured proteins and by disaggregating proteins, also in an autonomous, DnaK-independent fashion. Unfolded proteins bind initially to DnaJ; upon interaction with the DnaJ-bound protein, DnaK hydrolyzes its bound ATP, resulting in the formation of a stable complex. GrpE releases ADP from DnaK; ATP binding to DnaK triggers the release of the substrate protein, thus completing the reaction cycle. Several rounds of ATP-dependent interactions between DnaJ, DnaK and GrpE are required for fully efficient folding. Also involved, together with DnaK and GrpE, in the DNA replication of plasmids through activation of initiation proteins. The chain is Chaperone protein DnaJ from Blochmanniella pennsylvanica (strain BPEN).